Consider the following 228-residue polypeptide: tRNA (carboxymethyluridine(34)-5-O)-methyltransferase (228 aa).

The protein resides in the cytoplasm. Its subcellular location is the nucleus. The enzyme catalyses 5-(carboxymethyl)uridine(34) in tRNA + S-adenosyl-L-methionine = 5-(2-methoxy-2-oxoethyl)uridine(34) in tRNA + S-adenosyl-L-homocysteine. In terms of biological role, required for the methylation of the wobble bases at position 34 in tRNA. Appears to have a role in stress-response. This Schizosaccharomyces pombe (strain 972 / ATCC 24843) (Fission yeast) protein is tRNA (carboxymethyluridine(34)-5-O)-methyltransferase (trm9).